The sequence spans 417 residues: uncharacterized protein (417 aa).

The tract at residues 1 to 24 is disordered; the sequence is MSQPPINPLGQPQVPAAASPSGQP. A run of 4 helical transmembrane segments spans residues 54–74, 79–99, 117–137, and 143–163; these read VYDT…LLTA, LMLY…TLLI, AIVV…GAFV, and MLVF…LYFM. Over residues 211 to 228 the composition is skewed to basic and acidic residues; that stretch reads DLSASARMEEHEASQRQD. Disordered stretches follow at residues 211 to 283 and 308 to 417; these read DLSA…FKDD and IMPA…RKNK. Polar residues predominate over residues 312 to 322; it reads SSRSPNFSTGT. A compositionally biased stretch (low complexity) spans 336 to 347; that stretch reads EPSIPRVSSSSR. Positions 391 to 401 are enriched in polar residues; sequence STANLSPSNPF.

This sequence belongs to the chlamydial CPn_0443/CT_005/TC_0273 family.

It is found in the cell membrane. This is an uncharacterized protein from Chlamydia pneumoniae (Chlamydophila pneumoniae).